The sequence spans 583 residues: Secretogranin-2b (583 aa).

The N-terminal stretch at 1–28 (MMLSLPKLSAGGVVVLLATLLHTLTVQG) is a signal peptide. Disordered regions lie at residues 123 to 159 (AGES…AGFV) and 526 to 583 (VDNG…VAGM). Over residues 534 to 546 (AKRDTQGKEEPEG) the composition is skewed to basic and acidic residues.

Belongs to the chromogranin/secretogranin protein family.

It is found in the secreted. Its function is as follows. Neuroendocrine protein of the granin family that regulates the biogenesis of secretory granules. Required for neurovascular modeling of the hindbrain. Acts in a non-cell autonomous manner and is required for migration and proliferation of central artery endothelial cells. Required for normal courting behavior and spawning. The sequence is that of Secretogranin-2b from Danio rerio (Zebrafish).